A 270-amino-acid polypeptide reads, in one-letter code: Aliphatic sulfonates import ATP-binding protein SsuB 1 (270 aa).

The ABC transporter domain occupies 18–232; it reads VQLRNVVRQF…DSGQAGFQLI (215 aa). 50-57 serves as a coordination point for ATP; the sequence is GASGSGKT. The disordered stretch occupies residues 247-270; the sequence is PDTAPQASAPDSTFSELRRVASAR. Polar residues predominate over residues 251-261; sequence PQASAPDSTFS.

This sequence belongs to the ABC transporter superfamily. Aliphatic sulfonates importer (TC 3.A.1.17.2) family. In terms of assembly, the complex is composed of two ATP-binding proteins (SsuB), two transmembrane proteins (SsuC) and a solute-binding protein (SsuA).

It localises to the cell inner membrane. It catalyses the reaction ATP + H2O + aliphatic sulfonate-[sulfonate-binding protein]Side 1 = ADP + phosphate + aliphatic sulfonateSide 2 + [sulfonate-binding protein]Side 1.. Its function is as follows. Part of the ABC transporter complex SsuABC involved in aliphatic sulfonates import. Responsible for energy coupling to the transport system. This chain is Aliphatic sulfonates import ATP-binding protein SsuB 1, found in Pseudomonas syringae pv. tomato (strain ATCC BAA-871 / DC3000).